The chain runs to 146 residues: Large ribosomal subunit protein uL15 (146 aa).

Positions 1–13 (MKLHELKPAEGSR) are enriched in basic and acidic residues. The tract at residues 1–47 (MKLHELKPAEGSRKSRKRIGRGTGSGLGRNAGKGEKGQKARAGGGVR) is disordered. The span at 21–31 (RGTGSGLGRNA) shows a compositional bias: gly residues.

The protein belongs to the universal ribosomal protein uL15 family. As to quaternary structure, part of the 50S ribosomal subunit.

Its function is as follows. Binds to the 23S rRNA. This chain is Large ribosomal subunit protein uL15, found in Clostridium kluyveri (strain NBRC 12016).